Here is a 208-residue protein sequence, read N- to C-terminus: Uracil phosphoribosyltransferase (208 aa).

Residues arginine 78, arginine 103, and 130–138 (DPMLATGGS) each bind 5-phospho-alpha-D-ribose 1-diphosphate. Uracil-binding positions include isoleucine 193 and 198 to 200 (GDA). Aspartate 199 lines the 5-phospho-alpha-D-ribose 1-diphosphate pocket.

This sequence belongs to the UPRTase family. The cofactor is Mg(2+).

It carries out the reaction UMP + diphosphate = 5-phospho-alpha-D-ribose 1-diphosphate + uracil. It participates in pyrimidine metabolism; UMP biosynthesis via salvage pathway; UMP from uracil: step 1/1. Its activity is regulated as follows. Allosterically activated by GTP. Functionally, catalyzes the conversion of uracil and 5-phospho-alpha-D-ribose 1-diphosphate (PRPP) to UMP and diphosphate. In Shewanella sediminis (strain HAW-EB3), this protein is Uracil phosphoribosyltransferase.